A 162-amino-acid chain; its full sequence is Glycine cleavage system H protein, mitochondrial (162 aa).

A mitochondrion-targeting transit peptide spans 1–31; that stretch reads MALRIWASSTANALRLSSATRPHFSPLSRCF. Residues 53 to 135 enclose the Lipoyl-binding domain; it reads VATIGITDHA…YEDGWMIKVK (83 aa). An N6-lipoyllysine modification is found at Lys-94.

This sequence belongs to the GcvH family. In terms of assembly, the glycine cleavage system is composed of four proteins: P, T, L and H. Requires (R)-lipoate as cofactor.

The protein localises to the mitochondrion. Functionally, the glycine cleavage system catalyzes the degradation of glycine. The H protein shuttles the methylamine group of glycine from the P protein to the T protein. The chain is Glycine cleavage system H protein, mitochondrial (GDCSH) from Flaveria pringlei.